Reading from the N-terminus, the 176-residue chain is NAD(P)H-quinone oxidoreductase subunit 6, chloroplastic (176 aa).

The next 5 helical transmembrane spans lie at 10–30 (ILVLFGGFVLLLGGLGVVLLT), 33–53 (TFSAFSLGLVLVCISLFYILL), 60–80 (VAQLLIYVGAINVLIIFAVMF), 92–112 (FWTIGDGFTSLVCITIPFSLM), and 152–172 (FYLPFELISIILLVSLIGAIT).

Belongs to the complex I subunit 6 family. NDH is composed of at least 16 different subunits, 5 of which are encoded in the nucleus.

The protein resides in the plastid. Its subcellular location is the chloroplast thylakoid membrane. The enzyme catalyses a plastoquinone + NADH + (n+1) H(+)(in) = a plastoquinol + NAD(+) + n H(+)(out). It catalyses the reaction a plastoquinone + NADPH + (n+1) H(+)(in) = a plastoquinol + NADP(+) + n H(+)(out). Its function is as follows. NDH shuttles electrons from NAD(P)H:plastoquinone, via FMN and iron-sulfur (Fe-S) centers, to quinones in the photosynthetic chain and possibly in a chloroplast respiratory chain. The immediate electron acceptor for the enzyme in this species is believed to be plastoquinone. Couples the redox reaction to proton translocation, and thus conserves the redox energy in a proton gradient. This is NAD(P)H-quinone oxidoreductase subunit 6, chloroplastic (ndhG) from Oryza nivara (Indian wild rice).